Here is a 646-residue protein sequence, read N- to C-terminus: bZIP transcription factor 39 (646 aa).

Over 1–311 (MAEPALLDPT…KSKSKTKTKK (311 aa)) the chain is Cytoplasmic. The segment at 25–172 (HELPLAGGGG…GGTVCEEEED (148 aa)) is disordered. The segment covering 43–53 (LDGLEFDLPGD) has biased composition (low complexity). Residues 59–69 (FLLRSPERDDS) are compositionally biased toward basic and acidic residues. The span at 71-98 (EGSAAGSGPTASPSSSPTTSASNSAVAN) shows a compositional bias: low complexity. Residues 103 to 113 (EVKHEESDEGR) are compositionally biased toward basic and acidic residues. Positions 159-172 (DSDEGGTVCEEEED) are enriched in acidic residues. Residues 172 to 232 (DERRAARLMR…AENATLRQQL (61 aa)) enclose the bZIP domain. A basic motif region spans residues 174 to 205 (RRAARLMRNRESAQLSRQRKKRYVEELEEKVK). Residues 211 to 218 (INDLNSRI) are leucine-zipper. The tract at residues 272–308 (LVPIPRLKPQQPVPSSKVVKKPESKKTVENKSKSKTK) is disordered. Low complexity predominate over residues 279–288 (KPQQPVPSSK). The segment covering 291 to 303 (KKPESKKTVENKS) has biased composition (basic and acidic residues). A helical membrane pass occupies residues 312–332 (VASVSLLGLLLIMLVFGAFIP). At 333–646 (GFNHNFGMCG…FKSSSPHLVN (314 aa)) the chain is on the lumenal side. N-linked (GlcNAc...) asparagine glycosylation is found at Asn-371, Asn-399, Asn-525, Asn-530, Asn-565, and Asn-571. Positions 560–585 (TGKTANNTEPFNRTSESSSKLPDSKP) are disordered. Over residues 562 to 585 (KTANNTEPFNRTSESSSKLPDSKP) the composition is skewed to polar residues.

This sequence belongs to the bZIP family. In terms of tissue distribution, highly expressed in leaf blade, and at lower levels in roots, leaf sheaths, flowers and seeds.

It is found in the endoplasmic reticulum membrane. The protein localises to the nucleus. Functionally, transcription factor involved in endoplasmic reticulum (ER) stress response. Acts as a ER stress sensor and activates the transcription factor BZIP50 and the chaperone BIP1. In Oryza sativa subsp. japonica (Rice), this protein is bZIP transcription factor 39.